Consider the following 289-residue polypeptide: Methionyl-tRNA formyltransferase (289 aa).

106–109 serves as a coordination point for (6S)-5,6,7,8-tetrahydrofolate; that stretch reads SLLP.

It belongs to the Fmt family.

It carries out the reaction L-methionyl-tRNA(fMet) + (6R)-10-formyltetrahydrofolate = N-formyl-L-methionyl-tRNA(fMet) + (6S)-5,6,7,8-tetrahydrofolate + H(+). In terms of biological role, attaches a formyl group to the free amino group of methionyl-tRNA(fMet). The formyl group appears to play a dual role in the initiator identity of N-formylmethionyl-tRNA by promoting its recognition by IF2 and preventing the misappropriation of this tRNA by the elongation apparatus. In Mycoplasmopsis pulmonis (strain UAB CTIP) (Mycoplasma pulmonis), this protein is Methionyl-tRNA formyltransferase.